The sequence spans 305 residues: UDP-N-acetylenolpyruvoylglucosamine reductase 2 (305 aa).

Positions 33-197 constitute an FAD-binding PCMH-type domain; it reads VGGKADVFVA…LEARFELEEG (165 aa). Residue R176 is part of the active site. S226 functions as the Proton donor in the catalytic mechanism. E296 is an active-site residue.

This sequence belongs to the MurB family. FAD serves as cofactor.

It is found in the cytoplasm. The enzyme catalyses UDP-N-acetyl-alpha-D-muramate + NADP(+) = UDP-N-acetyl-3-O-(1-carboxyvinyl)-alpha-D-glucosamine + NADPH + H(+). It participates in cell wall biogenesis; peptidoglycan biosynthesis. Functionally, cell wall formation. This Bacillus anthracis protein is UDP-N-acetylenolpyruvoylglucosamine reductase 2 (murB2).